The chain runs to 220 residues: Chloramphenicol acetyltransferase (220 aa).

Residue His187 is the Proton acceptor of the active site.

The protein belongs to the chloramphenicol acetyltransferase family. As to quaternary structure, homotrimer.

It carries out the reaction chloramphenicol + acetyl-CoA = chloramphenicol 3-acetate + CoA. In terms of biological role, this enzyme is an effector of chloramphenicol resistance in bacteria. This Bacillus pumilus (Bacillus mesentericus) protein is Chloramphenicol acetyltransferase (cat86).